We begin with the raw amino-acid sequence, 1038 residues long: Zinc finger protein 628 (1038 aa).

A disordered region spans residues 1–31 (MAGSHVDMAPASTTEGTGEKPGPTAPAPTPA). A compositionally biased stretch (low complexity) spans 13 to 22 (TTEGTGEKPG). 6 consecutive C2H2-type zinc fingers follow at residues 34-56 (YECGECGKSFRWSSRLLHHQRTH), 62-84 (YKCPDCPKAFKGSSALLYHQRGH), 90-112 (YQCPDCPKAFKRSSLLQIHRSVH), 118-140 (FTCGQCGLAFKWSSHYQYHLRQH), 146-168 (YPCPDCPKAFKNSSSLRRHRHVH), and 174-196 (YTCGICGKSFTQSTNLRQHQRVH). At Thr197 the chain carries Phosphothreonine. A C2H2-type 7 zinc finger spans residues 202 to 224 (FRCPLCPKTFTHSSNLLLHHRTH). 2 disordered regions span residues 220 to 242 (HHRTHGPAPGPAPAPAPPGETSR) and 254 to 273 (LQPRSPPEPPAPPPQPPPVV). 2 stretches are compositionally biased toward pro residues: residues 227–237 (APGPAPAPAPP) and 257–273 (RSPPEPPAPPPQPPPVV). 7 C2H2-type zinc fingers span residues 346 to 368 (FACLPCGKSFRTVAGLSRHQHSH), 376 to 398 (FRCGSCDGAFPQLASLLAHQQCH), 446 to 468 (YKCAECGKAFKGSSGLRYHLRDH), 474 to 496 (YQCGECGKAFKRSSLLAIHQRVH), 502 to 524 (FTCGQCGLTFKWSSHYQYHLRLH), 530 to 552 (YACTECGKAFRNTSCLRRHRHVH), and 558 to 580 (HSCSVCGKSFAQTSNLRQHQRVH). Residue Thr581 is modified to Phosphothreonine. 2 consecutive C2H2-type zinc fingers follow at residues 586–608 (FRCPLCPKTFTHSSNLLLHQRTH) and 614–636 (FACPICGRGFVMAAYLQRHLRTH). 2 disordered regions span residues 637–661 (TPATTTSGTTGSAVASQPPAPLAAA) and 717–763 (PSSV…AGQG). Over residues 723–733 (PTPPPPPPPPK) the composition is skewed to pro residues. The span at 734–756 (VILLPPASAGGPGSGAARPGPRS) shows a compositional bias: low complexity. 4 consecutive repeat copies span residues 811–821 (VQLQPAQEVAT), 822–832 (VQLQPAQEVTT), 833–843 (VQLQPAQEVTT), and 844–854 (VQLQPLTGQVS). The segment at 811-854 (VQLQPAQEVATVQLQPAQEVTTVQLQPAQEVTTVQLQPLTGQVS) is 4 X 11 AA tandem repeats of VQLQP-[AL]-[QT]-[EG]-[VQ]-[ATV]-[ST]. An interaction with TAF4B region spans residues 922-1038 (DGEQTRLCVQ…LPAVQLVHTF (117 aa)).

In terms of assembly, interacts with TAF4B. As to expression, expressed widely in testis, in both germline and somatic cells. Seems to have particularly strong expression in meiotic spermatocytes, postmeiotic round spermatids and Sertoli cells. Not detected in elongating spermatids or mature sperm (at protein level). Expressed in testis, ovary, spleen, lung, brain, liver and kidney. Expressed in D3 embryonic stem cells and F9 embryonal carcinoma cells.

Its subcellular location is the nucleus. Transcriptional activator. Binds DNA on GT-box consensus sequence 5'-TTGGTT-3'. Plays a role in spermiogenesis. The sequence is that of Zinc finger protein 628 from Mus musculus (Mouse).